The sequence spans 170 residues: ATP synthase subunit b (170 aa).

A helical membrane pass occupies residues 30 to 50 (FFFVLAIFLVVLAVIGTFVVP).

It belongs to the ATPase B chain family. As to quaternary structure, F-type ATPases have 2 components, F(1) - the catalytic core - and F(0) - the membrane proton channel. F(1) has five subunits: alpha(3), beta(3), gamma(1), delta(1), epsilon(1). F(0) has three main subunits: a(1), b(2) and c(10-14). The alpha and beta chains form an alternating ring which encloses part of the gamma chain. F(1) is attached to F(0) by a central stalk formed by the gamma and epsilon chains, while a peripheral stalk is formed by the delta and b chains.

Its subcellular location is the cell membrane. F(1)F(0) ATP synthase produces ATP from ADP in the presence of a proton or sodium gradient. F-type ATPases consist of two structural domains, F(1) containing the extramembraneous catalytic core and F(0) containing the membrane proton channel, linked together by a central stalk and a peripheral stalk. During catalysis, ATP synthesis in the catalytic domain of F(1) is coupled via a rotary mechanism of the central stalk subunits to proton translocation. In terms of biological role, component of the F(0) channel, it forms part of the peripheral stalk, linking F(1) to F(0). In Mycobacterium ulcerans (strain Agy99), this protein is ATP synthase subunit b.